Reading from the N-terminus, the 154-residue chain is SsrA-binding protein (154 aa).

The protein belongs to the SmpB family.

Its subcellular location is the cytoplasm. Its function is as follows. Required for rescue of stalled ribosomes mediated by trans-translation. Binds to transfer-messenger RNA (tmRNA), required for stable association of tmRNA with ribosomes. tmRNA and SmpB together mimic tRNA shape, replacing the anticodon stem-loop with SmpB. tmRNA is encoded by the ssrA gene; the 2 termini fold to resemble tRNA(Ala) and it encodes a 'tag peptide', a short internal open reading frame. During trans-translation Ala-aminoacylated tmRNA acts like a tRNA, entering the A-site of stalled ribosomes, displacing the stalled mRNA. The ribosome then switches to translate the ORF on the tmRNA; the nascent peptide is terminated with the 'tag peptide' encoded by the tmRNA and targeted for degradation. The ribosome is freed to recommence translation, which seems to be the essential function of trans-translation. The chain is SsrA-binding protein from Treponema denticola (strain ATCC 35405 / DSM 14222 / CIP 103919 / JCM 8153 / KCTC 15104).